Reading from the N-terminus, the 262-residue chain is MNLFSLKAEKFLNLKTLSDLKLIKIFRWDSSEKKDPWYSTYVVSLKNCGPIVLDALIKIKNECDSTVSFRRSCREGICGSCAININGTNSLACLQKLNIKNNIIYVYPLPHIFVLKDLVVDLTNFYAQYRLIQPWLQSSLNIKSKKEIYQSKQDRLYLDGLYECILCACCSASCPSYWWNHDKYLGPAVLLQAYRWIVDSRDDNTLSRLLSLKDSYKLYRCHTIMNCTKTCPKHLNPGKVIASIKKRLLNLEVLGEKRDLNS.

The 2Fe-2S ferredoxin-type domain occupies 21–110 (KLIKIFRWDS…NNIIYVYPLP (90 aa)). C73, C78, C81, and C93 together coordinate [2Fe-2S] cluster. One can recognise a 4Fe-4S ferredoxin-type domain in the interval 154–184 (DRLYLDGLYECILCACCSASCPSYWWNHDKY). [4Fe-4S] cluster-binding residues include C164, C167, and C170. A [3Fe-4S] cluster-binding site is contributed by C174. W179 provides a ligand contact to a ubiquinone. [3Fe-4S] cluster contacts are provided by C221 and C227. C231 provides a ligand contact to [4Fe-4S] cluster.

Belongs to the succinate dehydrogenase/fumarate reductase iron-sulfur protein family. Component of complex II composed of four subunits: a flavoprotein (FP), an iron-sulfur protein (IP), and a cytochrome b composed of a large and a small subunit. It depends on [2Fe-2S] cluster as a cofactor. [3Fe-4S] cluster is required as a cofactor. The cofactor is [4Fe-4S] cluster.

It is found in the mitochondrion inner membrane. The catalysed reaction is a quinone + succinate = fumarate + a quinol. The protein operates within carbohydrate metabolism; tricarboxylic acid cycle; fumarate from succinate (eukaryal route): step 1/1. Iron-sulfur protein (IP) subunit of succinate dehydrogenase (SDH) that is involved in complex II of the mitochondrial electron transport chain and is responsible for transferring electrons from succinate to ubiquinone (coenzyme Q). This chain is Succinate dehydrogenase [ubiquinone] iron-sulfur subunit (SDH2), found in Cyanidium caldarium (Red alga).